A 92-amino-acid chain; its full sequence is Small ribosomal subunit protein bS20 (92 aa).

Residues 1–23 (MANSPSAKKRAKQAEKRRSHNAS) are disordered. The span at 7-20 (AKKRAKQAEKRRSH) shows a compositional bias: basic residues.

The protein belongs to the bacterial ribosomal protein bS20 family.

Its function is as follows. Binds directly to 16S ribosomal RNA. The polypeptide is Small ribosomal subunit protein bS20 (Pseudomonas fluorescens (strain ATCC BAA-477 / NRRL B-23932 / Pf-5)).